Consider the following 200-residue polypeptide: MARFTGSTWKKSRRLGISLSGTGKELERRPYAPGQHGPNQRKKLSEYGLQLQEKQKLRYMYGINERQFRTIFDRAGKMKGIHGANFMALLASRLDAVVYQLGLARTRRQARQLVNHGHIMVDGARVDIPSYQLKPGQVISVREKSQKLNIIAESVELSNHVPEYLTFDADKLEGTFVRVPERSELSAEINEQLIVEYYSR.

The region spanning 92-155 (SRLDAVVYQL…QKLNIIAESV (64 aa)) is the S4 RNA-binding domain.

Belongs to the universal ribosomal protein uS4 family. As to quaternary structure, part of the 30S ribosomal subunit. Contacts protein S5. The interaction surface between S4 and S5 is involved in control of translational fidelity.

Functionally, one of the primary rRNA binding proteins, it binds directly to 16S rRNA where it nucleates assembly of the body of the 30S subunit. With S5 and S12 plays an important role in translational accuracy. The sequence is that of Small ribosomal subunit protein uS4 from Macrococcus caseolyticus (strain JCSC5402) (Macrococcoides caseolyticum).